The primary structure comprises 282 residues: Putative 4-diphosphocytidyl-2-C-methyl-D-erythritol kinase (282 aa).

Residue K9 is part of the active site. Position 93–103 (93–103) interacts with ATP; it reads PVSAGLAGGSA. D135 is an active-site residue.

The protein belongs to the GHMP kinase family. IspE subfamily.

It catalyses the reaction 4-CDP-2-C-methyl-D-erythritol + ATP = 4-CDP-2-C-methyl-D-erythritol 2-phosphate + ADP + H(+). Its function is as follows. Catalyzes the phosphorylation of the position 2 hydroxy group of 4-diphosphocytidyl-2C-methyl-D-erythritol. The chain is Putative 4-diphosphocytidyl-2-C-methyl-D-erythritol kinase from Staphylococcus haemolyticus (strain JCSC1435).